A 38-amino-acid chain; its full sequence is Photosystem I reaction center subunit VIII (38 aa).

Residues 12 to 32 (WILIPIIGWLMPAVVMGLLFL) traverse the membrane as a helical segment.

It belongs to the PsaI family.

Its subcellular location is the cellular thylakoid membrane. Functionally, may help in the organization of the PsaL subunit. The polypeptide is Photosystem I reaction center subunit VIII (Gloeothece citriformis (strain PCC 7424) (Cyanothece sp. (strain PCC 7424))).